We begin with the raw amino-acid sequence, 189 residues long: Thymidine kinase (189 aa).

ATP is bound by residues 9–16 (GTMNSGKT) and 85–88 (DESQ). Catalysis depends on E86, which acts as the Proton acceptor. 4 residues coordinate Zn(2+): C143, C146, C180, and H183.

Belongs to the thymidine kinase family. As to quaternary structure, homotetramer.

It localises to the cytoplasm. The enzyme catalyses thymidine + ATP = dTMP + ADP + H(+). This is Thymidine kinase from Streptococcus pyogenes serotype M3 (strain ATCC BAA-595 / MGAS315).